A 140-amino-acid chain; its full sequence is Small ribosomal subunit protein uS9 (140 aa).

This sequence belongs to the universal ribosomal protein uS9 family.

The chain is Small ribosomal subunit protein uS9 from Desulfurococcus amylolyticus (strain DSM 18924 / JCM 16383 / VKM B-2413 / 1221n) (Desulfurococcus kamchatkensis).